Reading from the N-terminus, the 994-residue chain is Sarcoplasmic/endoplasmic reticulum calcium ATPase 1 (994 aa).

Residues Met1–Ser48 lie on the Cytoplasmic side of the membrane. Residues Leu49–Ala69 form a helical membrane-spanning segment. The Lumenal portion of the chain corresponds to Ile70–Val89. The chain crosses the membrane as a helical span at residues Glu90–Arg110. Topologically, residues Asn111 to Leu253 are cytoplasmic. The helical transmembrane segment at Asp254–Leu273 threads the bilayer. The Lumenal segment spans residues Ile274–Tyr295. Residues Phe296–Ala313 traverse the membrane as a helical segment. Positions 304, 305, 307, and 309 each coordinate Ca(2+). At Val314 to Met757 the chain is on the cytoplasmic side. Asp351 acts as the 4-aspartylphosphate intermediate in catalysis. Mg(2+) is bound by residues Asp351 and Thr353. Residues Thr353, Glu442, Arg489, Lys515, Arg560, Thr625, Gly626, Asp627, Arg678, and Lys684 each coordinate ATP. Asp703 contributes to the Mg(2+) binding site. Asn706 lines the ATP pocket. A helical transmembrane segment spans residues Lys758 to Leu777. The Ca(2+) site is built by Asn768 and Glu771. Residues Thr778–Leu787 lie on the Lumenal side of the membrane. A helical transmembrane segment spans residues Ile788–Gly808. Residues Ile788 to Gly808 form an interaction with PLN region. Ca(2+) is bound by residues Asn796, Thr799, and Asp800. Over Phe809–Leu828 the chain is Cytoplasmic. A helical transmembrane segment spans residues Ile829–Ala851. The Lumenal segment spans residues Ala852–Met897. Cys876 and Cys888 are joined by a disulfide. The helical transmembrane segment at Thr898–Ser917 threads the bilayer. Glu908 lines the Ca(2+) pocket. Over Glu918–Asn930 the chain is Cytoplasmic. A helical membrane pass occupies residues Phe931 to Tyr949. An interaction with PLN region spans residues Trp932–Leu943. The Lumenal portion of the chain corresponds to Val950–Val964. The helical transmembrane segment at Glu965–Lys985 threads the bilayer. The Cytoplasmic segment spans residues Phe986–Gly994.

It belongs to the cation transport ATPase (P-type) (TC 3.A.3) family. Type IIA subfamily. Interacts with sarcolipin (SLN). Interacts with phospholamban (PLN). Interacts with myoregulin (MRLN). Interacts with DWORF. Interacts with VMP1. It depends on Mg(2+) as a cofactor.

It is found in the endoplasmic reticulum membrane. The protein resides in the sarcoplasmic reticulum membrane. The enzyme catalyses Ca(2+)(in) + ATP + H2O = Ca(2+)(out) + ADP + phosphate + H(+). Its activity is regulated as follows. Inhibited by sarcolipin (SLN) and myoregulin (MRLN). Also shown to be inhibited by phospholamban (PLN) in vitro. Enhanced by DWORF; DWORF increases activity by displacing sarcolipin (SLN), phospholamban (PLN) and myoregulin (MRLN). Functionally, key regulator of striated muscle performance by acting as the major Ca(2+) ATPase responsible for the reuptake of cytosolic Ca(2+) into the sarcoplasmic reticulum. Catalyzes the hydrolysis of ATP coupled with the translocation of calcium from the cytosol to the sarcoplasmic reticulum lumen. Contributes to calcium sequestration involved in muscular excitation/contraction. This chain is Sarcoplasmic/endoplasmic reticulum calcium ATPase 1 (ATP2A1), found in Pelophylax lessonae (Pool frog).